Here is a 612-residue protein sequence, read N- to C-terminus: Rhotekin-2 (612 aa).

Positions 3 to 79 constitute an REM-1 domain; that stretch reads IKRKKIRESA…LRSQMGESNT (77 aa). The PH domain occupies 285 to 392; that stretch reads DEAMMGFLNQ…WMEAFWQHFY (108 aa). Disordered regions lie at residues 483–530 and 574–612; these read RNKP…SDKE and ENKA…QSQV. The segment covering 486 to 498 has biased composition (low complexity); that stretch reads PPLLSSDDPSTSS.

This is Rhotekin-2 (rtkn2) from Xenopus laevis (African clawed frog).